Consider the following 938-residue polypeptide: Isoleucine--tRNA ligase (938 aa).

Positions 58 to 68 match the 'HIGH' region motif; it reads PYANGHIHLGT. Glutamate 565 serves as a coordination point for L-isoleucyl-5'-AMP. A 'KMSKS' region motif is present at residues 606–610; the sequence is KMSKS. Lysine 609 contacts ATP. Positions 905, 908, 925, and 928 each coordinate Zn(2+).

The protein belongs to the class-I aminoacyl-tRNA synthetase family. IleS type 1 subfamily. Monomer. Zn(2+) is required as a cofactor.

The protein localises to the cytoplasm. It carries out the reaction tRNA(Ile) + L-isoleucine + ATP = L-isoleucyl-tRNA(Ile) + AMP + diphosphate. In terms of biological role, catalyzes the attachment of isoleucine to tRNA(Ile). As IleRS can inadvertently accommodate and process structurally similar amino acids such as valine, to avoid such errors it has two additional distinct tRNA(Ile)-dependent editing activities. One activity is designated as 'pretransfer' editing and involves the hydrolysis of activated Val-AMP. The other activity is designated 'posttransfer' editing and involves deacylation of mischarged Val-tRNA(Ile). The protein is Isoleucine--tRNA ligase of Nitratidesulfovibrio vulgaris (strain DSM 19637 / Miyazaki F) (Desulfovibrio vulgaris).